The primary structure comprises 452 residues: Phosphoglucosamine mutase (452 aa).

Serine 101 acts as the Phosphoserine intermediate in catalysis. Mg(2+)-binding residues include serine 101, aspartate 241, aspartate 243, and aspartate 245. Serine 101 carries the post-translational modification Phosphoserine.

This sequence belongs to the phosphohexose mutase family. Requires Mg(2+) as cofactor. In terms of processing, activated by phosphorylation.

The catalysed reaction is alpha-D-glucosamine 1-phosphate = D-glucosamine 6-phosphate. Its function is as follows. Catalyzes the conversion of glucosamine-6-phosphate to glucosamine-1-phosphate. This is Phosphoglucosamine mutase from Lactococcus lactis subsp. cremoris (strain SK11).